The primary structure comprises 235 residues: uncharacterized protein (235 aa).

One can recognise an N-acetyltransferase domain in the interval 82–221; that stretch reads LAFKKFPPDP…DTGELIRESP (140 aa).

It belongs to the acetyltransferase family.

It is found in the golgi apparatus membrane. Its subcellular location is the endoplasmic reticulum membrane. This is an uncharacterized protein from Schizosaccharomyces pombe (strain 972 / ATCC 24843) (Fission yeast).